Consider the following 294-residue polypeptide: ATP synthase gamma chain (294 aa).

It belongs to the ATPase gamma chain family. In terms of assembly, F-type ATPases have 2 components, CF(1) - the catalytic core - and CF(0) - the membrane proton channel. CF(1) has five subunits: alpha(3), beta(3), gamma(1), delta(1), epsilon(1). CF(0) has three main subunits: a, b and c.

The protein resides in the cell inner membrane. Produces ATP from ADP in the presence of a proton gradient across the membrane. The gamma chain is believed to be important in regulating ATPase activity and the flow of protons through the CF(0) complex. In Mesorhizobium japonicum (strain LMG 29417 / CECT 9101 / MAFF 303099) (Mesorhizobium loti (strain MAFF 303099)), this protein is ATP synthase gamma chain.